The chain runs to 306 residues: Protein YIPF1 (306 aa).

The Cytoplasmic segment spans residues 1–119 (MAAVDDLQFE…VRLYIRSNPD (119 aa)). Residues 14–62 (NAATSLTANPDATTVNIEDPGETPKHQPGSPRGSGREEDDELLGNDDSD) are disordered. Positions 15-29 (AATSLTANPDATTVN) are enriched in polar residues. Residues 50-59 (EEDDELLGND) show a composition bias toward acidic residues. A helical transmembrane segment spans residues 120-140 (LYGPFWICATLVFAIAISGNL). The Lumenal segment spans residues 141–162 (SNFLIHLGEKTYHYVPEFRKVS). A helical transmembrane segment spans residues 163 to 183 (IAATIIYAYAWLVPLALWGFL). At 184–200 (MWRNSKVMNIVSYSFLE) the chain is on the cytoplasmic side. The helical transmembrane segment at 201-221 (IVCVYGYSLFIYIPTAILWII) threads the bilayer. The Lumenal portion of the chain corresponds to 222 to 227 (PQKAVR). Residues 228–248 (WILVMIALGISGSLLAMTFWP) form a helical membrane-spanning segment. Over 249-256 (AVREDNRR) the chain is Cytoplasmic. A helical membrane pass occupies residues 257–277 (VALATIVTIVLLHMLLSVGCL). The Lumenal portion of the chain corresponds to 278-306 (AYFFDAPEMDHLPTTTATPNQTVAAAKSS). N-linked (GlcNAc...) asparagine glycosylation occurs at Asn297.

It belongs to the YIP1 family. In terms of assembly, interacts with YIPF6; this interaction may stabilize YIPF1. May also form a ternary complex with YIPF2 and YIPF6.

Its subcellular location is the golgi apparatus. The protein resides in the cis-Golgi network membrane. It localises to the trans-Golgi network membrane. The protein localises to the late endosome membrane. In Homo sapiens (Human), this protein is Protein YIPF1 (YIPF1).